A 114-amino-acid chain; its full sequence is Fumarate reductase subunit D (114 aa).

3 consecutive transmembrane segments (helical) span residues 27–47 (ICFP…LIPM), 50–70 (IIVF…TIFP), and 94–114 (WLFY…VIAL).

The protein belongs to the FrdD family. As to quaternary structure, part of an enzyme complex containing four subunits: a flavoprotein (FrdA), an iron-sulfur protein (FrdB), and two hydrophobic anchor proteins (FrdC and FrdD).

The protein resides in the cell inner membrane. Functionally, anchors the catalytic components of the fumarate reductase complex to the cell membrane, binds quinones. This is Fumarate reductase subunit D from Haemophilus ducreyi (strain 35000HP / ATCC 700724).